Consider the following 764-residue polypeptide: Plasma membrane fusion protein prm-1 (764 aa).

Residues 1–61 lie on the Extracellular side of the membrane; the sequence is MVYNEKNGGG…YLGLRARLSQ (61 aa). Residues 62-82 form a helical membrane-spanning segment; the sequence is LWFNRWTILLILVLIRVIILT. The Cytoplasmic segment spans residues 83-149; it reads ANLKENLGDA…LKMILTGVQA (67 aa). Residues 150–170 traverse the membrane as a helical segment; it reads IIMFVINMYIGTFACLVAAFI. Topologically, residues 171 to 334 are extracellular; sequence HGGLHVATAV…SLITLVYKAK (164 aa). 2 N-linked (GlcNAc...) asparagine glycosylation sites follow: Asn-271 and Asn-315. Residues 335–355 traverse the membrane as a helical segment; it reads IAFLVVIIILALLAIFVMGYI. Over 356-424 the chain is Cytoplasmic; that stretch reads EYRGFKRERE…AFAYATSLPA (69 aa). The helical transmembrane segment at 425–445 threads the bilayer; the sequence is LFVLSLAVAGMLSCLFQWVLL. Residues 446–624 are Extracellular-facing; it reads RQIEKKAPEL…NGVIQEALIT (179 aa). Residues Asn-479, Asn-508, and Asn-527 are each glycosylated (N-linked (GlcNAc...) asparagine). Residues 625 to 645 form a helical membrane-spanning segment; sequence LGLFLTYVIVVLIGVMGALIG. The Cytoplasmic segment spans residues 646–764; sequence WATPGKTRGE…EKVPGYFTPI (119 aa). 2 disordered regions span residues 653-701 and 735-754; these read RGEG…GGGG and HQRT…PHGD.

It belongs to the PRM1 family.

The protein localises to the cell membrane. Functionally, involved in cell fusion during mating by stabilizing the plasma membrane fusion event. This Neurospora crassa (strain ATCC 24698 / 74-OR23-1A / CBS 708.71 / DSM 1257 / FGSC 987) protein is Plasma membrane fusion protein prm-1 (prm-1).